The chain runs to 196 residues: MSSPLRMDVTFLLAAIAVTWVCGLKIGFPGFSTPPRSFIQHPKRTLCPEDCDIASPFKCEESPTCLRLFQVCNGRWDCEHGSDEDNALCAAVLRPLECMIWEFLEGQRDWILPNLFNDANTDLVAHALHEAYSMGDLQSYLNLTDQNIENIRNSTRGAIVGDPRPLMALGMPDRAWPEVMYLLKELYNLGLDVWAE.

The N-terminal stretch at 1–25 is a signal peptide; that stretch reads MSSPLRMDVTFLLAAIAVTWVCGLK. Positions 50–90 constitute an LDL-receptor class A domain; it reads DCDIASPFKCEESPTCLRLFQVCNGRWDCEHGSDEDNALCA. 3 disulfide bridges follow: Cys51-Cys65, Cys59-Cys78, and Cys72-Cys89.

Expressed by the venom duct.

The protein localises to the secreted. This chain is Neuropeptide prohormone-4, found in Conus victoriae (Queen Victoria cone).